Consider the following 456-residue polypeptide: Chromosomal replication initiator protein DnaA 1 (456 aa).

The tract at residues 1–68 (MRAWEEFLLL…KASLINNNGK (68 aa)) is domain I, interacts with DnaA modulators. Positions 68–101 (KPIRVRVTSLDKSTPFKETQIQQEKTAYFTMKYG) are domain II. The domain III, AAA+ region stretch occupies residues 102-320 (DIDPNMSFAN…HALTTLAKRV (219 aa)). The ATP site is built by Ser-150, Gly-152, Lys-153, and Thr-154. Residues 321-456 (AYKKLSHQML…AYQSLDFIED (136 aa)) are domain IV, binds dsDNA.

This sequence belongs to the DnaA family. As to quaternary structure, oligomerizes as a right-handed, spiral filament on DNA at oriC.

The protein localises to the cytoplasm. Its function is as follows. Plays an essential role in the initiation and regulation of chromosomal replication. ATP-DnaA binds to the origin of replication (oriC) to initiate formation of the DNA replication initiation complex once per cell cycle. Binds the DnaA box (a 9 base pair repeat at the origin) and separates the double-stranded (ds)DNA. Forms a right-handed helical filament on oriC DNA; dsDNA binds to the exterior of the filament while single-stranded (ss)DNA is stabiized in the filament's interior. The ATP-DnaA-oriC complex binds and stabilizes one strand of the AT-rich DNA unwinding element (DUE), permitting loading of DNA polymerase. After initiation quickly degrades to an ADP-DnaA complex that is not apt for DNA replication. Binds acidic phospholipids. This Chlamydia trachomatis serovar D (strain ATCC VR-885 / DSM 19411 / UW-3/Cx) protein is Chromosomal replication initiator protein DnaA 1.